The following is a 270-amino-acid chain: Regulatory protein RecX (270 aa).

Belongs to the RecX family.

The protein localises to the cytoplasm. In terms of biological role, modulates RecA activity. The sequence is that of Regulatory protein RecX from Bacillus cereus (strain G9842).